The primary structure comprises 1727 residues: DNA-directed RNA polymerase II subunit rpb1 (1727 aa).

Residues cysteine 66, cysteine 69, cysteine 76, histidine 79, cysteine 106, cysteine 109, cysteine 147, and cysteine 175 each coordinate Zn(2+). Mg(2+) is bound by residues aspartate 486, aspartate 488, and aspartate 490. Residues 819-831 (PQEFFFHAMGGRE) form a bridging helix region. Lysine 1266 is covalently cross-linked (Glycyl lysine isopeptide (Lys-Gly) (interchain with G-Cter in ubiquitin)). 2 disordered regions span residues 1478 to 1512 (EPSN…YDAP) and 1551 to 1727 (PTYS…NKKK). The segment covering 1480-1505 (SNVSYPDTPGSQTPSYSYGDGSTTPF) has biased composition (polar residues). Repeat copies occupy residues 1553–1559 (YSPTSPS), 1560–1566 (YSPTSPS), 1567–1573 (YSPTSPS), 1574–1580 (YSPTSPS), 1581–1587 (YSPTSPS), 1588–1594 (YSPTSPS), 1595–1601 (YSPTSPF), 1602–1608 (YSPTSPS), 1609–1615 (YSPTSPS), 1616–1622 (YSPTSPS), 1623–1629 (YSPTSPS), 1630–1636 (YSPTSPS), 1637–1643 (YSPTSPS), 1644–1650 (YSPTSPS), 1651–1657 (YSPTSPS), 1658–1664 (YSPTSPS), 1665–1671 (YSPTSPS), 1672–1678 (YSPTSPS), 1679–1685 (YSPTSPS), 1686–1692 (YSPSSPS), 1693–1699 (YSPSSPS), 1700–1706 (YSPSSPS), and 1707–1713 (YSPSSPT). The interval 1553 to 1713 (YSPTSPSYSP…SPSYSPSSPT (161 aa)) is C-terminal domain (CTD); 23 X 7 AA tandem repeats of Y-S-P-[ST]-S-P-[FST].

The protein belongs to the RNA polymerase beta' chain family. Component of the RNA polymerase II (Pol II) complex consisting of 12 subunits. Post-translationally, the tandem heptapeptide repeats in the C-terminal domain (CTD) can be highly phosphorylated. The phosphorylation activates Pol II. Phosphorylation occurs mainly at residues 'Ser-2' and 'Ser-5' of the heptapeptide repeat. The phosphorylation state is believed to result from the balanced action of site-specific CTD kinases and phosphatase, and a 'CTD code' that specifies the position of Pol II within the transcription cycle has been proposed. Following transcription stress, the elongating form of RNA polymerase II (RNA pol IIo) is polyubiquitinated via 'Lys-63'-linkages on Lys-1266 at DNA damage sites without leading to degradation: ubiquitination promotes RNA pol IIo backtracking to allow access by the transcription-coupled nucleotide excision repair (TC-NER) machinery. Subsequent DEF1-dependent polyubiquitination by the elongin complex via 'Lys-48'-linkages may lead to proteasome-mediated degradation; presumably at stalled RNA pol II where TC-NER has failed, to halt global transcription and enable 'last resort' DNA repair pathways.

It localises to the nucleus. The enzyme catalyses RNA(n) + a ribonucleoside 5'-triphosphate = RNA(n+1) + diphosphate. DNA-dependent RNA polymerase catalyzes the transcription of DNA into RNA using the four ribonucleoside triphosphates as substrates. Largest and catalytic component of RNA polymerase II which synthesizes mRNA precursors and many functional non-coding RNAs. Forms the polymerase active center together with the second largest subunit. Pol II is the central component of the basal RNA polymerase II transcription machinery. It is composed of mobile elements that move relative to each other. RPB1 is part of the core element with the central large cleft, the clamp element that moves to open and close the cleft and the jaws that are thought to grab the incoming DNA template. At the start of transcription, a single-stranded DNA template strand of the promoter is positioned within the central active site cleft of Pol II. A bridging helix emanates from RPB1 and crosses the cleft near the catalytic site and is thought to promote translocation of Pol II by acting as a ratchet that moves the RNA-DNA hybrid through the active site by switching from straight to bent conformations at each step of nucleotide addition. During transcription elongation, Pol II moves on the template as the transcript elongates. Elongation is influenced by the phosphorylation status of the C-terminal domain (CTD) of Pol II largest subunit (RPB1), which serves as a platform for assembly of factors that regulate transcription initiation, elongation, termination and mRNA processing. This chain is DNA-directed RNA polymerase II subunit rpb1 (polr2a), found in Dictyostelium discoideum (Social amoeba).